An 820-amino-acid chain; its full sequence is Potassium channel GORK (820 aa).

The Cytoplasmic segment spans residues 1–69; the sequence is MGRLRRRQEI…PKNRWYKAWE (69 aa). Residues 70–90 traverse the membrane as a helical segment; sequence MFILVWAIYSSLFTPMEFGFF. Residues 91-97 lie on the Extracellular side of the membrane; sequence RGLPERL. Residues 98–118 traverse the membrane as a helical segment; the sequence is FVLDIVGQIAFLVDIVLQFFV. Residues 119–141 lie on the Cytoplasmic side of the membrane; that stretch reads AYRDTQTYRTVYKPTRIAFRYLK. The chain crosses the membrane as a helical span at residues 142–162; it reads SHFLMDFIGCFPWDLIYKASG. The Extracellular portion of the chain corresponds to 163–168; sequence KHELVR. A helical; Voltage-sensor transmembrane segment spans residues 169–189; sequence YLLWIRLFRVRKVVEFFQRLE. At 190–203 the chain is on the cytoplasmic side; that stretch reads KDTRINYLFTRILK. A helical transmembrane segment spans residues 204-224; the sequence is LLFVEVYCTHTAACIFYYLAT. Residues 225 to 259 lie on the Extracellular side of the membrane; sequence TLPPENEGYTWIGSLKLGDYSYENFREIDLWKRYT. The pore-forming intramembrane region spans 260–279; the sequence is TALYFAIVTMATVGYGDIHA. The Extracellular portion of the chain corresponds to 280 to 285; that stretch reads VNLREM. The helical transmembrane segment at 286–306 threads the bilayer; the sequence is IFVMIYVSFDMVLGAYLIGNI. Residues 307-820 are Cytoplasmic-facing; that stretch reads TALIVKGSNT…YMISDTTDQT (514 aa). A nucleoside 3',5'-cyclic phosphate is bound at residue 386–508; that stretch reads LFKGCSTEFI…ILNNIMEEKE (123 aa). ANK repeat units lie at residues 528-559, 563-592, 596-625, 627-656, 660-689, and 693-722; these read EAEL…DPNK, DGRS…DVNL, FGHT…SFNL, DSGN…NPNS, DHRT…SVIS, and WGNS…AQSS. One can recognise a KHA domain in the interval 740–820; it reads KCTVFPFHPQ…YMISDTTDQT (81 aa).

Belongs to the potassium channel family. Plant (TC 1.A.1.4) subfamily. In terms of assembly, the potassium channel is probably composed of a homo- or heterotetrameric complex of pore-forming subunits. In terms of tissue distribution, expressed in guard cell-containing tissues, in root epidermal cells and in root hairs. Detected in vascular cells of the root and shoot.

The protein localises to the membrane. In terms of biological role, major selective outward-rectifying potassium channel of the guard cell membrane. Involved in regulation of stomatal movements according to the water status. Assuming opened or closed conformations in response to the voltage difference across the membrane, the channel is activated by depolarization. Conductance of the channel is modulated in a potassium-dependent fashion. May interact with the cytoskeleton or with regulatory proteins. The chain is Potassium channel GORK (GORK) from Arabidopsis thaliana (Mouse-ear cress).